Reading from the N-terminus, the 143-residue chain is Large ribosomal subunit protein uL11 (143 aa).

The protein belongs to the universal ribosomal protein uL11 family. Part of the ribosomal stalk of the 50S ribosomal subunit. Interacts with L10 and the large rRNA to form the base of the stalk. L10 forms an elongated spine to which L12 dimers bind in a sequential fashion forming a multimeric L10(L12)X complex. In terms of processing, one or more lysine residues are methylated.

Functionally, forms part of the ribosomal stalk which helps the ribosome interact with GTP-bound translation factors. The chain is Large ribosomal subunit protein uL11 from Stutzerimonas stutzeri (strain A1501) (Pseudomonas stutzeri).